The chain runs to 580 residues: MVQLKAEIDAGPLDNSISIFSLIENGLRQKPDAPAVICLHESADALDHLIVPSNPRERERGPADGECLMLSYRQLHHTAVKLAVGFRAKGVAPGSTLLMLVPNGGHYALLLWACILARLTFISVDPAEVLDDLKSQRIASILQETRPEVVVIPSVIEAKAMDGILGATSITELLKISLKKVQEPGWERMTKLVSDGIANPLDMDALVEEARCDDPDRLYSIMFTSGTSERPKGCPLRVGGAAHMVRSWSWLINQINSSYALQQAHNSRGIAPAQTVQTWAEGGAVVMTGRGFDVDDMLDAIRLNYASFVVLTPAMAHALAAHLETHQIDMSSVKTVQVGGDAVTKNVLVKCNSLFPHADVCINHGMTEGGACFEWSFLDIAPSDVPFFGQICPVGKTARGAAVRIWDTEREEIAERGRPGQLHLSSESIIRHYLHGESAGSFYQQGGQRWFITGDIAMMTDEGTVYILGRSKDTIVSDGHLVMPFVIESCLEDLTGSQASVIAIPHPVYGQVPYAVLQTLKQVDDHAIQDQVVRLLGTDYQLAGINSLEALGMTTVPVNDTRKIIKSQIKEAVMRYIDGK.

It belongs to the ATP-dependent AMP-binding enzyme family.

It functions in the pathway secondary metabolite biosynthesis. In terms of biological role, acyl--CoA ligase; part of the gene cluster that mediates the biosynthesis of dibenzodioxocinones such as pestalotiollide B, a novel class of inhibitors against cholesterol ester transfer protein (CEPT). The biosynthesis initiates from condensation of acetate and malonate units catalyzed by the non-reducing PKS pks8/GME11356. Pks8/GME11356 lacks a thioesterase (TE) domain, which is important to the cyclizing of the third ring of atrochrysone carboxylic acid, and the esterase GME11355 might play the role of TE and catalyzes the cyclization reaction of the C ring. The lactamase-like protein GME11357 (or other beta-lactamases in Pestalotiopsis microspora) probably hydrolyzes the thioester bond between the ACP of pks8/GME11356 and the intermediate to release atrochrysone carboxylic acid, which is spontaneously dehydrates to form endocrocin anthrone. Endocrocin anthrone is further converted to emodin via the endocrocin intermediate. Emodin is then oxidized by several enzymes such as the Baeyer-Villiger oxidase GME11358, the oxidoreductase GME11367, the short chain dehydrogenase/reductase GME11373, as well as by other oxidoreductases from the cluster, to modify the A and C rings and open the B ring, and finally yield monodictyphenone. The prenyltransferase GME11375 may catalyze the addition reaction between the C5 side chains and the carbon bone of dibenzodioxocinones. The remaining biochemical reactions to the final product dibenzodioxocinones should be methylation catalyzed by methyltransferase GME11366 and reduction and lactonization reaction catalyzed by a series of oxidordeuctases. The polypeptide is Acyl--CoA ligase GME11374 (Pestalotiopsis microspora).